Consider the following 418-residue polypeptide: Putative ion-transport protein YfeO (418 aa).

12 helical membrane-spanning segments follow: residues 10–30, 54–74, 99–119, 120–140, 149–169, 186–206, 223–243, 258–278, 300–320, 322–342, 343–363, and 371–391; these read LLLS…LIVV, DSPL…GLVI, ALPG…SLGP, EHPI…RLLP, ILAS…AALI, LFAP…FFHP, ILSG…AVWC, VLVL…GGPV, DYFL…ASGF, GGRI…LHEH, VPAV…VLVV, and LFMA…CIVM.

The protein belongs to the chloride channel (TC 2.A.49) family.

The protein resides in the cell membrane. The chain is Putative ion-transport protein YfeO from Escherichia coli (strain 55989 / EAEC).